The following is a 447-amino-acid chain: Tubulin beta-1 chain (447 aa).

GTP-binding residues include glutamine 11, glutamate 69, serine 138, glycine 142, threonine 143, glycine 144, asparagine 204, and asparagine 226. Glutamate 69 is a Mg(2+) binding site. Residues 411 to 427 (AESNMNDLVSEYQQYQD) show a composition bias toward polar residues. The tract at residues 411–447 (AESNMNDLVSEYQQYQDATADEEGDYEDEEEQVPEDE) is disordered. Acidic residues predominate over residues 429–447 (TADEEGDYEDEEEQVPEDE).

This sequence belongs to the tubulin family. Dimer of alpha and beta chains. A typical microtubule is a hollow water-filled tube with an outer diameter of 25 nm and an inner diameter of 15 nM. Alpha-beta heterodimers associate head-to-tail to form protofilaments running lengthwise along the microtubule wall with the beta-tubulin subunit facing the microtubule plus end conferring a structural polarity. Microtubules usually have 13 protofilaments but different protofilament numbers can be found in some organisms and specialized cells. Mg(2+) is required as a cofactor. As to expression, expressed in leaf sheaths.

Its subcellular location is the cytoplasm. It localises to the cytoskeleton. Its function is as follows. Tubulin is the major constituent of microtubules, a cylinder consisting of laterally associated linear protofilaments composed of alpha- and beta-tubulin heterodimers. Microtubules grow by the addition of GTP-tubulin dimers to the microtubule end, where a stabilizing cap forms. Below the cap, tubulin dimers are in GDP-bound state, owing to GTPase activity of alpha-tubulin. This is Tubulin beta-1 chain (TUBB1) from Oryza sativa subsp. japonica (Rice).